A 544-amino-acid polypeptide reads, in one-letter code: Cytochrome P450 82A1 (544 aa).

Cysteine 481 lines the heme pocket.

It belongs to the cytochrome P450 family. Heme serves as cofactor.

It localises to the membrane. The chain is Cytochrome P450 82A1 (CYP82A1) from Pisum sativum (Garden pea).